The sequence spans 828 residues: MQDRNLIDVNLTSEMKTSFIDYAMSVIVARALPDVRDGLKPVHRRILYGMNELGVTPDKPHKKSARITGDVMGKYHPHGDSSIYEAMVRMAQWWSYRHMLVDGHGNFGSMDGDGAAAQRYTEARMSKIALELLRDINKNTVNFQDNYDGSEREPVVLPARFPNLLVNGATGIAVGMATNIPPHNLAESIDAVKMVMEHPDCTTRELMEVIPGPDFPTGALVMGRSGIHRAYDTGKGSIVLRSRTEIETTQTGRERIVVTEFPYGVNKTKVHEHIVRLAQEKRLEGITAVRDESSREGVRFVIEIRREASATVILNNLFKLTSLQTNFSFNMLAIENGVPKILSLRQIIDNYISHQKEVIIRRTRFDKDKAEARAHILEGLLIALDHLDEVIAIIRNSETDVIAQTELMSRFDLSERQSQAILDMRLRRLTGLERDKIQSEYDDLLALIADLSDILAKPERIITIIKEEMDEIKRKYANPRRTELMVGEVLSLEDEDLIEEEDVLITLSNKGYIKRLAQDEFRAQKRGGRGVQGTGVNNDDFVRELISTSTHDTLLFFTNFGRVYRLKAYEIPEYGRTAKGLPIVNLLKLEDGETIQTIINARKEETAGKSFFFTTKQGIVKRTEVSEFNNIRQNGLRALKLKEGDQLINVLLTSGQDDIIIGTHSGYSVRFNEASIRNMGRSATGVRGVKLREDDRVVGASRIQDNQEVLVITENGFGKRTSATDYPTKGRGGKGIKTANITPKNGQLAGLVTVDGTEDIMVITNKGVIIRTNVANISQTGRATLGVKIMKLDADAKIVTFTLVQPEDSSIAEINTDRENSISKNKDN.

In terms of domain architecture, Topo IIA-type catalytic spans 32–497 (LPDVRDGLKP…EVLSLEDEDL (466 aa)). Tyr-120 acts as the O-(5'-phospho-DNA)-tyrosine intermediate in catalysis. Positions 524-530 (QKRGGRG) match the GyrA-box motif.

This sequence belongs to the type II topoisomerase GyrA/ParC subunit family. As to quaternary structure, heterotetramer, composed of two GyrA and two GyrB chains. In the heterotetramer, GyrA contains the active site tyrosine that forms a transient covalent intermediate with DNA, while GyrB binds cofactors and catalyzes ATP hydrolysis.

The protein resides in the cytoplasm. The catalysed reaction is ATP-dependent breakage, passage and rejoining of double-stranded DNA.. Its function is as follows. A type II topoisomerase that negatively supercoils closed circular double-stranded (ds) DNA in an ATP-dependent manner to modulate DNA topology and maintain chromosomes in an underwound state. Negative supercoiling favors strand separation, and DNA replication, transcription, recombination and repair, all of which involve strand separation. Also able to catalyze the interconversion of other topological isomers of dsDNA rings, including catenanes and knotted rings. Type II topoisomerases break and join 2 DNA strands simultaneously in an ATP-dependent manner. The chain is DNA gyrase subunit A from Streptococcus pyogenes serotype M1.